A 389-amino-acid chain; its full sequence is Xylose isomerase (389 aa).

Catalysis depends on residues histidine 54 and aspartate 57. 7 residues coordinate Mg(2+): glutamate 181, glutamate 217, histidine 220, aspartate 245, aspartate 255, aspartate 257, and aspartate 287.

The protein belongs to the xylose isomerase family. As to quaternary structure, homotetramer. Requires Mg(2+) as cofactor.

The protein localises to the cytoplasm. The catalysed reaction is alpha-D-xylose = alpha-D-xylulofuranose. Functionally, involved in D-xylose catabolism. In Streptomyces violaceusniger, this protein is Xylose isomerase (xylA).